Here is a 366-residue protein sequence, read N- to C-terminus: tRNA/tmRNA (uracil-C(5))-methyltransferase (366 aa).

Positions 188, 216, 221, 237, and 297 each coordinate S-adenosyl-L-methionine. Cysteine 322 acts as the Nucleophile in catalysis. Residue glutamate 356 is the Proton acceptor of the active site.

This sequence belongs to the class I-like SAM-binding methyltransferase superfamily. RNA M5U methyltransferase family. TrmA subfamily.

It catalyses the reaction uridine(54) in tRNA + S-adenosyl-L-methionine = 5-methyluridine(54) in tRNA + S-adenosyl-L-homocysteine + H(+). It carries out the reaction uridine(341) in tmRNA + S-adenosyl-L-methionine = 5-methyluridine(341) in tmRNA + S-adenosyl-L-homocysteine + H(+). In terms of biological role, dual-specificity methyltransferase that catalyzes the formation of 5-methyluridine at position 54 (m5U54) in all tRNAs, and that of position 341 (m5U341) in tmRNA (transfer-mRNA). The polypeptide is tRNA/tmRNA (uracil-C(5))-methyltransferase (Histophilus somni (strain 129Pt) (Haemophilus somnus)).